The primary structure comprises 446 residues: Sensor-type histidine kinase PrrB (446 aa).

Helical transmembrane passes span 19–39 and 151–171; these read VVAT…VVWV and LLIC…LAAF. Residues 172–222 form the HAMP domain; the sequence is AVRPFKQLAQQTRSVDAGGEAPRVEVHGATEAVEIAEAMRGMLQRIWNEQN. The Histidine kinase domain maps to 237 to 446; the sequence is VSSHELRTPL…RLLLRISAPS (210 aa). A Phosphohistidine; by autocatalysis modification is found at His-240.

Autophosphorylated.

The protein localises to the cell membrane. It carries out the reaction ATP + protein L-histidine = ADP + protein N-phospho-L-histidine.. Its function is as follows. Member of the two-component regulatory system PrrB/PrrA that is involved specifically in early intracellular multiplication of Mycobacterium and is essential for its viability. Functions as a sensor protein kinase which is autophosphorylated at a histidine residue and transfers its phosphate group to the conserved aspartic acid residue in the regulatory domain of PrrA. In turn, PrrA binds to the upstream promoter regions of target genes including itself to positively regulate their expression. This chain is Sensor-type histidine kinase PrrB (prrB), found in Mycobacterium leprae (strain TN).